The primary structure comprises 376 residues: MAKRDYYEVLGVAKNASDDEIKKAYRKLAMKYHPDRNPDNKDAEEHFKEVKEAYEMLSDSQKRAAYDQYGHAGVDPNMGGAGAQGFGGFADAFGDIFGDIFGQAAGGRGGRGGPQVYRGADLRYSMEITLEQAAHGYDTQIRVPSWVSCEVCHGSGAKPGTKPETCPTCHGQGTVRMSQGFFSIQQTCPKCHGTGTYIPEPCAHCHGSGKVKETKTLEVKIPAGIDDGMRIRSAGNGEPGINGGPPGDLYVEIHIKPHAVFERDGDDLHCQMPIPFTTAALGGEIEVPTLAGRATFPVPEGTQSGKTFRLRGKGIKGLRSSIAGDLYVHVQVETPVKLTEHQRDLLKQFEKSLAEGGARHSPQSKSWFDRVKSFFE.

Residues 5–70 form the J domain; it reads DYYEVLGVAK…QKRAAYDQYG (66 aa). The CR-type zinc finger occupies 136 to 214; it reads GYDTQIRVPS…CHGSGKVKET (79 aa). The Zn(2+) site is built by Cys-149, Cys-152, Cys-166, Cys-169, Cys-188, Cys-191, Cys-202, and Cys-205. CXXCXGXG motif repeat units lie at residues 149-156, 166-173, 188-195, and 202-209; these read CEVCHGSG, CPTCHGQG, CPKCHGTG, and CAHCHGSG.

Belongs to the DnaJ family. In terms of assembly, homodimer. It depends on Zn(2+) as a cofactor.

It localises to the cytoplasm. In terms of biological role, participates actively in the response to hyperosmotic and heat shock by preventing the aggregation of stress-denatured proteins and by disaggregating proteins, also in an autonomous, DnaK-independent fashion. Unfolded proteins bind initially to DnaJ; upon interaction with the DnaJ-bound protein, DnaK hydrolyzes its bound ATP, resulting in the formation of a stable complex. GrpE releases ADP from DnaK; ATP binding to DnaK triggers the release of the substrate protein, thus completing the reaction cycle. Several rounds of ATP-dependent interactions between DnaJ, DnaK and GrpE are required for fully efficient folding. Also involved, together with DnaK and GrpE, in the DNA replication of plasmids through activation of initiation proteins. This Burkholderia multivorans (strain ATCC 17616 / 249) protein is Chaperone protein DnaJ.